The sequence spans 124 residues: Holo-[acyl-carrier-protein] synthase (124 aa).

Mg(2+) contacts are provided by Asp-8 and Glu-56.

This sequence belongs to the P-Pant transferase superfamily. AcpS family. Mg(2+) serves as cofactor.

The protein localises to the cytoplasm. The enzyme catalyses apo-[ACP] + CoA = holo-[ACP] + adenosine 3',5'-bisphosphate + H(+). In terms of biological role, transfers the 4'-phosphopantetheine moiety from coenzyme A to a Ser of acyl-carrier-protein. The protein is Holo-[acyl-carrier-protein] synthase of Maridesulfovibrio salexigens (strain ATCC 14822 / DSM 2638 / NCIMB 8403 / VKM B-1763) (Desulfovibrio salexigens).